The primary structure comprises 356 residues: Branched-chain-amino-acid transaminase 1 (356 aa).

Lys-197 is modified (N6-(pyridoxal phosphate)lysine).

Belongs to the class-IV pyridoxal-phosphate-dependent aminotransferase family. Pyridoxal 5'-phosphate is required as a cofactor.

The enzyme catalyses L-leucine + 2-oxoglutarate = 4-methyl-2-oxopentanoate + L-glutamate. The catalysed reaction is L-isoleucine + 2-oxoglutarate = (S)-3-methyl-2-oxopentanoate + L-glutamate. It catalyses the reaction L-valine + 2-oxoglutarate = 3-methyl-2-oxobutanoate + L-glutamate. It participates in amino-acid biosynthesis; L-isoleucine biosynthesis; L-isoleucine from 2-oxobutanoate: step 4/4. Its pathway is amino-acid biosynthesis; L-leucine biosynthesis; L-leucine from 3-methyl-2-oxobutanoate: step 4/4. The protein operates within amino-acid biosynthesis; L-valine biosynthesis; L-valine from pyruvate: step 4/4. With respect to regulation, inhibited by canaline. Its function is as follows. Transaminates branched-chain amino acids and ketoglutarate. Involved in the final step of the methionine regeneration pathway, where ketomethiobutyrate (KMTB) is converted to methionine via a transamination. The amino donor preference is isoleucine, leucine, valine, phenylalanine, and tyrosine. The polypeptide is Branched-chain-amino-acid transaminase 1 (ilvE) (Bacillus subtilis (strain 168)).